The sequence spans 264 residues: MSKRKQILVTNDDGYESEGLLALVEALKPLGDVTVVAPTTEKSACGHSLTLTRPLRFVEVSEHFYKLDDGTPTDCIFLSLTKLFANEKKPDIVISGINIGANMGEDITYSGTASAAMEAVLQGIPGIAVSQVYMNSGASIREFGYELAQQSIIKLVQKIFEGSYPLPDRKFLNVNIPPIPAAECKGFKSTRLGNKHYGFHAEVHYNPRGLEYYWIGLPRLEWMETAGHTTDFEAVKEDYISITPVQLDMTSHSDIHNLEEWLNK.

Residues D12, D13, S43, and N98 each coordinate a divalent metal cation.

The protein belongs to the SurE nucleotidase family. A divalent metal cation serves as cofactor.

The protein resides in the cytoplasm. The catalysed reaction is a ribonucleoside 5'-phosphate + H2O = a ribonucleoside + phosphate. Nucleotidase that shows phosphatase activity on nucleoside 5'-monophosphates. The sequence is that of 5'-nucleotidase SurE from Sulfurovum sp. (strain NBC37-1).